A 451-amino-acid chain; its full sequence is Mannan endo-1,6-alpha-mannosidase DFG5 (451 aa).

A signal peptide spans 1–21 (MVSLQQLTISILLLFTASVQS). N-linked (GlcNAc...) asparagine glycosylation is found at Asn-86, Asn-111, Asn-135, Asn-203, Asn-243, Asn-268, and Asn-402. The GPI-anchor amidated alanine moiety is linked to residue Ala-429. A propeptide spans 430–451 (GAGVLTAIVLAVILGGAIWMIF) (removed in mature form).

It belongs to the glycosyl hydrolase 76 family. In terms of processing, the GPI-anchor is attached to the protein in the endoplasmic reticulum and serves to target the protein to the cell surface. There, the glucosamine-inositol phospholipid moiety is cleaved off and the GPI-modified mannoprotein is covalently attached via its lipidless GPI glycan remnant to the 1,6-beta-glucan of the outer cell wall layer. Post-translationally, N-mannosylated.

The protein localises to the secreted. It localises to the cell wall. Its subcellular location is the cell membrane. The enzyme catalyses Random hydrolysis of (1-&gt;6)-alpha-D-mannosidic linkages in unbranched (1-&gt;6)-mannans.. In terms of biological role, required for normal synthesis of the cell wall and alkaline pH-induced hypha formation. This Candida albicans (strain SC5314 / ATCC MYA-2876) (Yeast) protein is Mannan endo-1,6-alpha-mannosidase DFG5 (DFG5).